Here is a 446-residue protein sequence, read N- to C-terminus: Methylenetetrahydrofolate--tRNA-(uracil-5-)-methyltransferase TrmFO (446 aa).

8-13 (GAGLAG) contributes to the FAD binding site.

Belongs to the MnmG family. TrmFO subfamily. It depends on FAD as a cofactor.

It is found in the cytoplasm. It carries out the reaction uridine(54) in tRNA + (6R)-5,10-methylene-5,6,7,8-tetrahydrofolate + NADH + H(+) = 5-methyluridine(54) in tRNA + (6S)-5,6,7,8-tetrahydrofolate + NAD(+). The catalysed reaction is uridine(54) in tRNA + (6R)-5,10-methylene-5,6,7,8-tetrahydrofolate + NADPH + H(+) = 5-methyluridine(54) in tRNA + (6S)-5,6,7,8-tetrahydrofolate + NADP(+). Catalyzes the folate-dependent formation of 5-methyl-uridine at position 54 (M-5-U54) in all tRNAs. The sequence is that of Methylenetetrahydrofolate--tRNA-(uracil-5-)-methyltransferase TrmFO from Paracoccus denitrificans (strain Pd 1222).